The chain runs to 236 residues: Biosynthetic peptidoglycan transglycosylase (236 aa).

Residues A12 to P31 traverse the membrane as a helical segment.

It belongs to the glycosyltransferase 51 family.

It localises to the cell inner membrane. The catalysed reaction is [GlcNAc-(1-&gt;4)-Mur2Ac(oyl-L-Ala-gamma-D-Glu-L-Lys-D-Ala-D-Ala)](n)-di-trans,octa-cis-undecaprenyl diphosphate + beta-D-GlcNAc-(1-&gt;4)-Mur2Ac(oyl-L-Ala-gamma-D-Glu-L-Lys-D-Ala-D-Ala)-di-trans,octa-cis-undecaprenyl diphosphate = [GlcNAc-(1-&gt;4)-Mur2Ac(oyl-L-Ala-gamma-D-Glu-L-Lys-D-Ala-D-Ala)](n+1)-di-trans,octa-cis-undecaprenyl diphosphate + di-trans,octa-cis-undecaprenyl diphosphate + H(+). It participates in cell wall biogenesis; peptidoglycan biosynthesis. Peptidoglycan polymerase that catalyzes glycan chain elongation from lipid-linked precursors. This is Biosynthetic peptidoglycan transglycosylase from Pseudomonas putida (strain ATCC 700007 / DSM 6899 / JCM 31910 / BCRC 17059 / LMG 24140 / F1).